The chain runs to 132 residues: UPF0102 protein Achl_2213 (132 aa).

It belongs to the UPF0102 family.

The chain is UPF0102 protein Achl_2213 from Pseudarthrobacter chlorophenolicus (strain ATCC 700700 / DSM 12829 / CIP 107037 / JCM 12360 / KCTC 9906 / NCIMB 13794 / A6) (Arthrobacter chlorophenolicus).